The sequence spans 741 residues: MEQTYQYAWIIPFLPLPVPMLIGLGLLLFPTATKSIRRMWAFQSVLLLSIVMIFSMNLSIQQINSSSVYQYVWSWIINNDISLEFGYLIDPLTSIMSILITTVGIMVLIYSDNYMSHDHGYLRFFAYMSFFSTSMLGLVTSSNLIQIYIFWELVGMCSYLLIGFWFTRPVAAKACQKAFVTNRVGDFGLLLGILGFYWITGSFEFRDLFQIFNNLISNNEVNLLFVTLCAVLLFAGAIAKSAQFPLHVWLPDAMEGPTPISALIHAATMVAAGIFLVARLMPLFIVIPHIMNFISLIGIITVFFGATLALAQKDIKRGLAYSTMSQLGYMMLALGMGSYRSALFHLITHAYSKALLFLGSGSVIHSMETLVGYCPKKSQNMVLMGGLTKHVPITKNSFLLGTLSLCGIPPLACFWSKDEILNDSWLYSPIFAIIAWSTAGLTAFYMCRIYLLTFEGHLNVHFQNYSGKRNTPLYSISLWGKEGSKISNKNFRLVTLLKMKKNGPPSFFSNKVYKMDENVGNLVQPFISIPNFGNTKTSLYPYESDNTMLFPILIFIPFTLFVGFLGIPFNQDVDILSKWLTPSINLLHKNSNNLIDWYEFSKDAVFSVSIASFGIFIAFFLYKPVYSSFQNLDLINSFVKMGPKRIFSDKIKNAIYDWSYNRGYIDAFYGTFLTVGVRKLAEFTHFFDRRIIDGIPNGVGFISFFVAEVIKSVGGGRISSYLFFYFSYVSIFLLIYYFLNF.

The next 16 helical transmembrane spans lie at 9-29 (WIIP…LLLF), 40-60 (WAFQ…NLSI), 89-109 (IDPL…MVLI), 125-145 (FAYM…SNLI), 147-167 (IYIF…FWFT), 185-205 (GDFG…SFEF), 219-239 (NEVN…GAIA), 258-278 (TPIS…FLVA), 284-304 (FIVI…TVFF), 327-347 (LGYM…FHLI), 354-374 (ALLF…VGYC), 396-416 (NSFL…CFWS), 425-445 (WLYS…TAFY), 549-569 (LFPI…GIPF), 605-625 (VFSV…YKPV), and 721-741 (YLFF…FLNF).

Belongs to the complex I subunit 5 family. NDH is composed of at least 16 different subunits, 5 of which are encoded in the nucleus.

Its subcellular location is the plastid. It is found in the chloroplast thylakoid membrane. It carries out the reaction a plastoquinone + NADH + (n+1) H(+)(in) = a plastoquinol + NAD(+) + n H(+)(out). The catalysed reaction is a plastoquinone + NADPH + (n+1) H(+)(in) = a plastoquinol + NADP(+) + n H(+)(out). In terms of biological role, NDH shuttles electrons from NAD(P)H:plastoquinone, via FMN and iron-sulfur (Fe-S) centers, to quinones in the photosynthetic chain and possibly in a chloroplast respiratory chain. The immediate electron acceptor for the enzyme in this species is believed to be plastoquinone. Couples the redox reaction to proton translocation, and thus conserves the redox energy in a proton gradient. This Flaveria ramosissima (Yellowtops) protein is NAD(P)H-quinone oxidoreductase subunit 5, chloroplastic (ndhF).